Consider the following 192-residue polypeptide: Fe/S biogenesis protein NfuA (192 aa).

[4Fe-4S] cluster-binding residues include Cys-149 and Cys-152.

This sequence belongs to the NfuA family. In terms of assembly, homodimer. [4Fe-4S] cluster is required as a cofactor.

Functionally, involved in iron-sulfur cluster biogenesis. Binds a 4Fe-4S cluster, can transfer this cluster to apoproteins, and thereby intervenes in the maturation of Fe/S proteins. Could also act as a scaffold/chaperone for damaged Fe/S proteins. In Shewanella sp. (strain MR-7), this protein is Fe/S biogenesis protein NfuA.